The following is a 447-amino-acid chain: GTPase Der (447 aa).

EngA-type G domains are found at residues 3-167 (PVIA…QLPE) and 180-353 (IRLA…KAAT). Residues 9-16 (GRPNVGKS), 56-60 (DTGGF), 119-122 (NKAE), 186-193 (GRPNVGKS), 233-237 (DTAGL), and 298-301 (NKWD) each bind GTP. The region spanning 353–438 (TCKMPTPVLT…PLRIEMKTSR (86 aa)) is the KH-like domain.

It belongs to the TRAFAC class TrmE-Era-EngA-EngB-Septin-like GTPase superfamily. EngA (Der) GTPase family. Associates with the 50S ribosomal subunit.

Functionally, GTPase that plays an essential role in the late steps of ribosome biogenesis. This is GTPase Der from Paracidovorax citrulli (strain AAC00-1) (Acidovorax citrulli).